The primary structure comprises 276 residues: Large ribosomal subunit protein uL2 (276 aa).

The segment at 224–276 is disordered; that stretch reads AMNPIDHPHGGGEGKTSGGRNPVTPWGVPTKGKKTRKRNKSSNKYIKRVSDKG. A compositionally biased stretch (basic residues) spans 254–270; sequence KGKKTRKRNKSSNKYIK.

This sequence belongs to the universal ribosomal protein uL2 family. In terms of assembly, part of the 50S ribosomal subunit. Forms a bridge to the 30S subunit in the 70S ribosome.

Its function is as follows. One of the primary rRNA binding proteins. Required for association of the 30S and 50S subunits to form the 70S ribosome, for tRNA binding and peptide bond formation. It has been suggested to have peptidyltransferase activity; this is somewhat controversial. Makes several contacts with the 16S rRNA in the 70S ribosome. The chain is Large ribosomal subunit protein uL2 from Ehrlichia chaffeensis (strain ATCC CRL-10679 / Arkansas).